Here is a 157-residue protein sequence, read N- to C-terminus: 6,7-dimethyl-8-ribityllumazine synthase (157 aa).

Residues Phe22, 57-59, and 81-83 each bind 5-amino-6-(D-ribitylamino)uracil; these read AYE and TVI. Position 86-87 (86-87) interacts with (2S)-2-hydroxy-3-oxobutyl phosphate; it reads GT. Residue His89 is the Proton donor of the active site. Position 114 (Phe114) interacts with 5-amino-6-(D-ribitylamino)uracil. Arg128 is a (2S)-2-hydroxy-3-oxobutyl phosphate binding site.

This sequence belongs to the DMRL synthase family. Forms an icosahedral capsid composed of 60 subunits, arranged as a dodecamer of pentamers.

It catalyses the reaction (2S)-2-hydroxy-3-oxobutyl phosphate + 5-amino-6-(D-ribitylamino)uracil = 6,7-dimethyl-8-(1-D-ribityl)lumazine + phosphate + 2 H2O + H(+). It functions in the pathway cofactor biosynthesis; riboflavin biosynthesis; riboflavin from 2-hydroxy-3-oxobutyl phosphate and 5-amino-6-(D-ribitylamino)uracil: step 1/2. Its function is as follows. Catalyzes the formation of 6,7-dimethyl-8-ribityllumazine by condensation of 5-amino-6-(D-ribitylamino)uracil with 3,4-dihydroxy-2-butanone 4-phosphate. This is the penultimate step in the biosynthesis of riboflavin. This chain is 6,7-dimethyl-8-ribityllumazine synthase, found in Histophilus somni (strain 129Pt) (Haemophilus somnus).